The primary structure comprises 676 residues: DNA ligase (676 aa).

NAD(+) contacts are provided by residues 35–39 (DNEYD), 84–85 (SL), and Glu-115. Catalysis depends on Lys-117, which acts as the N6-AMP-lysine intermediate. Residues Arg-138, Glu-177, Lys-294, and Lys-318 each coordinate NAD(+). Zn(2+) is bound by residues Cys-412, Cys-415, Cys-430, and Cys-436. The region spanning 595–676 (PTRQPLNGES…FLAFLAQYSA (82 aa)) is the BRCT domain.

The protein belongs to the NAD-dependent DNA ligase family. LigA subfamily. Requires Mg(2+) as cofactor. It depends on Mn(2+) as a cofactor.

It carries out the reaction NAD(+) + (deoxyribonucleotide)n-3'-hydroxyl + 5'-phospho-(deoxyribonucleotide)m = (deoxyribonucleotide)n+m + AMP + beta-nicotinamide D-nucleotide.. Its function is as follows. DNA ligase that catalyzes the formation of phosphodiester linkages between 5'-phosphoryl and 3'-hydroxyl groups in double-stranded DNA using NAD as a coenzyme and as the energy source for the reaction. It is essential for DNA replication and repair of damaged DNA. The protein is DNA ligase of Acinetobacter baylyi (strain ATCC 33305 / BD413 / ADP1).